Here is a 496-residue protein sequence, read N- to C-terminus: Probable CtpA-like serine protease (496 aa).

Residues 1-16 (MDDKQHTSSSDDERAE) are compositionally biased toward basic and acidic residues. The disordered stretch occupies residues 1 to 27 (MDDKQHTSSSDDERAEIATSNQDQQTN). The segment covering 18 to 27 (ATSNQDQQTN) has biased composition (polar residues). Residues 39–59 (FISILIGTILITAVITVVAYI) traverse the membrane as a helical segment. A PDZ domain is found at 124 to 206 (TKSFNEGVSG…TEVTLTVQRG (83 aa)). Residues Ser329, Asp340, and Lys354 each act as charge relay system in the active site.

It belongs to the peptidase S41A family.

It is found in the cell membrane. This chain is Probable CtpA-like serine protease, found in Staphylococcus aureus (strain bovine RF122 / ET3-1).